The primary structure comprises 123 residues: Large ribosomal subunit protein bL20 (123 aa).

The protein belongs to the bacterial ribosomal protein bL20 family.

Functionally, binds directly to 23S ribosomal RNA and is necessary for the in vitro assembly process of the 50S ribosomal subunit. It is not involved in the protein synthesizing functions of that subunit. The sequence is that of Large ribosomal subunit protein bL20 from Pseudothermotoga lettingae (strain ATCC BAA-301 / DSM 14385 / NBRC 107922 / TMO) (Thermotoga lettingae).